We begin with the raw amino-acid sequence, 314 residues long: Homoserine O-succinyltransferase (314 aa).

Residue C142 is the Acyl-thioester intermediate of the active site. 2 residues coordinate substrate: K163 and S192. Residue H235 is the Proton acceptor of the active site. Residue E237 is part of the active site. R249 lines the substrate pocket.

Belongs to the MetA family.

It localises to the cytoplasm. It catalyses the reaction L-homoserine + succinyl-CoA = O-succinyl-L-homoserine + CoA. Its pathway is amino-acid biosynthesis; L-methionine biosynthesis via de novo pathway; O-succinyl-L-homoserine from L-homoserine: step 1/1. Its function is as follows. Transfers a succinyl group from succinyl-CoA to L-homoserine, forming succinyl-L-homoserine. The chain is Homoserine O-succinyltransferase from Shewanella woodyi (strain ATCC 51908 / MS32).